The sequence spans 245 residues: MLLIPAIDLKEGRCVRLKQGLMEEATVFSDSPADTALHWFEQGARRLHLVDLNGAFAGVPQNLPAIKDILAAVAKDIPVQLGGGMRDLKTIGQYLDLGLNDVIIGTAAVKNPDLVREACKAFPGRIIVGLDAKDGMAAIDGWATVTGHHVIDLAKRFEDDGVNSIIYTDIGRDGMMSGVNIDATVKLAQSVRIPVIASGGLTGLDDIPALCAAEKHGVAGAITGRAIYEGSIDFAQAQQLADSLD.

The active-site Proton acceptor is the D8. D131 (proton donor) is an active-site residue.

The protein belongs to the HisA/HisF family.

The protein localises to the cytoplasm. It carries out the reaction 1-(5-phospho-beta-D-ribosyl)-5-[(5-phospho-beta-D-ribosylamino)methylideneamino]imidazole-4-carboxamide = 5-[(5-phospho-1-deoxy-D-ribulos-1-ylimino)methylamino]-1-(5-phospho-beta-D-ribosyl)imidazole-4-carboxamide. Its pathway is amino-acid biosynthesis; L-histidine biosynthesis; L-histidine from 5-phospho-alpha-D-ribose 1-diphosphate: step 4/9. The chain is 1-(5-phosphoribosyl)-5-[(5-phosphoribosylamino)methylideneamino] imidazole-4-carboxamide isomerase from Neisseria gonorrhoeae (strain NCCP11945).